Here is a 153-residue protein sequence, read N- to C-terminus: 3-hydroxyacyl-[acyl-carrier-protein] dehydratase FabZ (153 aa).

Histidine 54 is an active-site residue.

The protein belongs to the thioester dehydratase family. FabZ subfamily.

Its subcellular location is the cytoplasm. It catalyses the reaction a (3R)-hydroxyacyl-[ACP] = a (2E)-enoyl-[ACP] + H2O. Functionally, involved in unsaturated fatty acids biosynthesis. Catalyzes the dehydration of short chain beta-hydroxyacyl-ACPs and long chain saturated and unsaturated beta-hydroxyacyl-ACPs. This is 3-hydroxyacyl-[acyl-carrier-protein] dehydratase FabZ from Shewanella pealeana (strain ATCC 700345 / ANG-SQ1).